Reading from the N-terminus, the 141-residue chain is Ubiquitin-like protein ATG12 (141 aa).

A disordered region spans residues 24–54; that stretch reads LELSPETAIPEPPSSVAVSPGTEEPPGDTKK. Residue Gly141 forms a Glycyl lysine isopeptide (Gly-Lys) (interchain with K-? in acceptor protein) linkage.

The protein belongs to the ATG12 family. Forms a conjugate with ATG5. Part of the minor complex composed of 4 sets of ATG12-ATG5 and ATG16L1 (400 kDa); this complex interacts with ATG3 leading to disruption of ATG7 interaction and promotion of ATG8-like proteins lipidation. Forms an 800-kDa complex composed of ATG12-ATG5 and ATG16L2. Interacts with DHX58/RIG-1, IFIH1/MDA5 and MAVS/IPS-1 in monomeric form as well as in ATG12-ATG5 conjugate. The interaction with MAVS is further enhanced upon vesicular stomatitis virus (VSV) infection. Interacts with ATG3; this interaction is essential for phosphatidylethanolamine (PE)-conjugated ATG8-like proteins formation. Interacts with ATG7. Interacts with ATG10. The ATG12-ATG5 conjugate interacts with RAB33A; this interaction is bridged by ATG16L1 and promotes ATG12-ATG5-ATG16L1 complex recruitment to phagophores. Interacts with TECPR1. Interacts with SH3BGRL. The ATG12-ATG5 conjugate interacts with PDCD6IP (via the BRO1 domain); this interaction is bridged by ATG12 and promotes multiple PDCD6IP-mediated functions such as endolysosomal trafficking, macroautophagy and exosome biogenesis. Acetylated by EP300.

Its subcellular location is the cytoplasm. The protein localises to the preautophagosomal structure membrane. Its function is as follows. Ubiquitin-like protein involved in autophagy vesicles formation. Conjugation with ATG5 through a ubiquitin-like conjugating system involving also ATG7 as an E1-like activating enzyme and ATG10 as an E2-like conjugating enzyme, is essential for its function. The ATG12-ATG5 conjugate acts as an E3-like enzyme which is required for lipidation of ATG8 family proteins and their association to the vesicle membranes. The ATG12-ATG5 conjugate also negatively regulates the innate antiviral immune response by blocking the type I IFN production pathway through direct association with RARRES3 and MAVS. Also plays a role in translation or delivery of incoming viral RNA to the translation apparatus. As part of the ATG8 conjugation system with ATG5 and ATG16L1, required for recruitment of LRRK2 to stressed lysosomes and induction of LRRK2 kinase activity in response to lysosomal stress. This is Ubiquitin-like protein ATG12 from Rattus norvegicus (Rat).